The following is a 443-amino-acid chain: Xaa-Pro dipeptidase (443 aa).

5 residues coordinate Mn(2+): D246, D257, H339, E384, and E423.

Belongs to the peptidase M24B family. Bacterial-type prolidase subfamily. It depends on Mn(2+) as a cofactor.

The catalysed reaction is Xaa-L-Pro dipeptide + H2O = an L-alpha-amino acid + L-proline. Splits dipeptides with a prolyl residue in the C-terminal position. This Salmonella arizonae (strain ATCC BAA-731 / CDC346-86 / RSK2980) protein is Xaa-Pro dipeptidase.